We begin with the raw amino-acid sequence, 2153 residues long: RNA-directed RNA polymerase L (2153 aa).

The Mn(2+) site is built by His-36, Glu-54, Asp-97, Glu-110, and Val-111. Lys-124 functions as the For endonuclease activity in the catalytic mechanism. Positions 957-1143 (TGNVIKFKRR…AVNQEMWKSM (187 aa)) constitute a RdRp catalytic domain. Asp-1100 lines the Mg(2+) pocket. The tract at residues 1291-2153 (KQAFYSYKHT…FPHDPVSSFY (863 aa)) is interaction with the viral nucleoprotein.

Belongs to the Bunyavirales RNA polymerase family. Interacts with the viral nucleoprotein; this interaction is required for RdRp function. Mn(2+) is required as a cofactor. Mg(2+) serves as cofactor.

Its subcellular location is the host cytoplasm. The protein resides in the host perinuclear region. The enzyme catalyses RNA(n) + a ribonucleoside 5'-triphosphate = RNA(n+1) + diphosphate. Its function is as follows. RNA-dependent RNA polymerase, which is responsible for the replication and transcription of the viral RNA genome using antigenomic RNA as an intermediate. During transcription, synthesizes subgenomic RNAs and assures their capping by a cap-snatching mechanism, which involves the endonuclease activity cleaving the host capped pre-mRNAs. These short capped RNAs are then used as primers for viral transcription. Cleaves ssRNA substrates but not DNA. Seems to downregulate the expression of its own and heterologous mRNAs through its endonuclease activity. In Sin Nombre orthohantavirus (SNV), this protein is RNA-directed RNA polymerase L.